The sequence spans 261 residues: Pyridoxine-5'-phosphate oxidase (261 aa).

A pyridoxal 5'-phosphate-binding site is contributed by Arg42–Arg45. Arg95–Leu98 contributes to the FMN binding site. Lys100 serves as a coordination point for pyridoxal 5'-phosphate. FMN is bound by residues Phe110–Thr111, Arg116–Lys117, and Gln139. The pyridoxal 5'-phosphate site is built by Tyr157, Arg161, and Ser165. FMN contacts are provided by residues Gln174–Ser175 and Trp219. Residue Arg225–His227 coordinates pyridoxal 5'-phosphate. Arg229 contributes to the FMN binding site. A Phosphothreonine modification is found at Thr238. Ser241 bears the Phosphoserine mark.

The protein belongs to the pyridoxamine 5'-phosphate oxidase family. Homodimer. The cofactor is FMN. Ubiquitous. Expressed in liver, brain, lung, prostate and stomach (at protein level).

The catalysed reaction is pyridoxine 5'-phosphate + O2 = pyridoxal 5'-phosphate + H2O2. The enzyme catalyses pyridoxamine 5'-phosphate + O2 + H2O = pyridoxal 5'-phosphate + H2O2 + NH4(+). Its pathway is cofactor metabolism; pyridoxal 5'-phosphate salvage; pyridoxal 5'-phosphate from pyridoxamine 5'-phosphate: step 1/1. It functions in the pathway cofactor metabolism; pyridoxal 5'-phosphate salvage; pyridoxal 5'-phosphate from pyridoxine 5'-phosphate: step 1/1. Catalyzes the oxidation of either pyridoxine 5'-phosphate (PNP) or pyridoxamine 5'-phosphate (PMP) into pyridoxal 5'-phosphate (PLP). In Homo sapiens (Human), this protein is Pyridoxine-5'-phosphate oxidase (PNPO).